The chain runs to 412 residues: Adenosine receptor A2a (412 aa).

The Extracellular portion of the chain corresponds to 1–7 (MPTVGSL). Residues 8-32 (VYIMVELAIALLAILGNMLVCWAVW) traverse the membrane as a helical segment. Topologically, residues 33–42 (LNSNLQNVTN) are cytoplasmic. The helical transmembrane segment at 43 to 66 (YFVVSLAAADIAVGVLAIPFAITI) threads the bilayer. The Extracellular portion of the chain corresponds to 67-77 (STGFCAACHGC). Intrachain disulfides connect Cys-71–Cys-159, Cys-74–Cys-146, and Cys-77–Cys-166. The helical transmembrane segment at 78 to 100 (LFIACFVLVLTQSSIFSLLAIAI) threads the bilayer. Residues 101-120 (DRYIAIRIPLRYNGLVTGTR) lie on the Cytoplasmic side of the membrane. Residues 121–143 (AKGVIAVCWVLSFAIGLTPMLGW) traverse the membrane as a helical segment. The Extracellular segment spans residues 144 to 173 (NNCHHWGEGENQSQGCGEGQVACLFEDVVP). An N-linked (GlcNAc...) asparagine glycan is attached at Asn-154. Glu-169 contributes to the adenosine binding site. A helical membrane pass occupies residues 174 to 198 (MNYMVYYNFFACVLVPLLLMLGVYL). At 199–234 (RIFLAARRQLKQMETQPLPGERARSTLQKEVHAAKS) the chain is on the cytoplasmic side. A helical membrane pass occupies residues 235–258 (LAIIVGLFALCWLPLHIINCFTFF). Adenosine is bound at residue Asn-253. Cys-259 and Cys-262 are joined by a disulfide. Over 259–266 (CPECPHAP) the chain is Extracellular. A helical transmembrane segment spans residues 267-290 (LWLMYPAIILSHFNSVVNPFIYAY). 2 residues coordinate adenosine: Ser-277 and His-278. Over 291-412 (RIREFRHTFH…PLAQDGAGVS (122 aa)) the chain is Cytoplasmic. The disordered stretch occupies residues 368-412 (RASARESPGDTGLPDVELLSHELHGASPESPGLEGPLAQDGAGVS).

Belongs to the G-protein coupled receptor 1 family. Interacts (via cytoplasmic C-terminal domain) with USP4; the interaction is direct. May interact with DRD4. Interacts with NECAB2. Interacts (via cytoplasmic C-terminal domain) with GAS2L2; interaction enhances receptor-mediated adenylyl cyclase activity. In terms of processing, ubiquitinated. Deubiquitinated by USP4; leading to stabilization and expression at the cell surface.

The protein resides in the cell membrane. Its function is as follows. Receptor for adenosine. The activity of this receptor is mediated by G proteins which activate adenylyl cyclase. The polypeptide is Adenosine receptor A2a (ADORA2A) (Equus caballus (Horse)).